An 83-amino-acid chain; its full sequence is Toxin AahP985 (83 aa).

The first 18 residues, 1–18 (MNYLVMISLALLIAGVDS), serve as a signal peptide directing secretion. The LCN-type CS-alpha/beta domain maps to 20 to 82 (RDAYIAKNDN…VPIKLSGECH (63 aa)). Disulfide bonds link cysteine 30–cysteine 81, cysteine 34–cysteine 54, cysteine 40–cysteine 64, and cysteine 44–cysteine 66.

It belongs to the long (4 C-C) scorpion toxin superfamily. Sodium channel inhibitor family. Alpha subfamily. In terms of tissue distribution, expressed by the venom gland.

It localises to the secreted. Functionally, binds voltage-independently at site-3 of sodium channels (Nav) and inhibits the inactivation of the activated channels, thereby blocking neuronal transmission. This chain is Toxin AahP985, found in Androctonus australis (Sahara scorpion).